The sequence spans 454 residues: MSYSVLEALRKSPEEVRKVLLARRVDASLVDKFLALDAKWRQLKKEIDELRHLYNQLSREGAKAPPERRREISEKARELAAKLEKVEEEVKELERQREELLYSFPNLIHESVPVCPEGVDSVPVRHWGTVKVSNAALQSLDPGVEYVVVEKEPVGHADMAEVVLQMADTLKAGEVAGSRFYYLFDDLVWLDFALAMYAMDQLAQKGFRPVIPPYMLKFDIIRRVLDFDTFKDAIYKIEGEDLYLIATAEHGIAAYLYKRELLEEELPQLYVGWSPCFRKEAGAGNRDLKGIFRVHIFHKVEQFVFSLPEESWKWHEEITRNTEELIRGLGLPYRVVNICAHDLGAPAAKKYDIEVWYPAQAKYRELASCSNVTDWQSYRLGIRVTRKGMKKEYVHTLNCTGLATTRTITAILENFQRDDGVVEIPKALRPYLEPIKAAPKEYIYPRRIKQQPPS.

247-249 (TAE) contributes to the L-serine binding site. ATP is bound by residues 278-280 (RKE) and Val-294. Glu-301 contributes to the L-serine binding site. An ATP-binding site is contributed by 365-368 (ELAS). Thr-400 provides a ligand contact to L-serine.

The protein belongs to the class-II aminoacyl-tRNA synthetase family. Type-1 seryl-tRNA synthetase subfamily. As to quaternary structure, homodimer. The tRNA molecule binds across the dimer.

Its subcellular location is the cytoplasm. The catalysed reaction is tRNA(Ser) + L-serine + ATP = L-seryl-tRNA(Ser) + AMP + diphosphate + H(+). It catalyses the reaction tRNA(Sec) + L-serine + ATP = L-seryl-tRNA(Sec) + AMP + diphosphate + H(+). It functions in the pathway aminoacyl-tRNA biosynthesis; selenocysteinyl-tRNA(Sec) biosynthesis; L-seryl-tRNA(Sec) from L-serine and tRNA(Sec): step 1/1. Functionally, catalyzes the attachment of serine to tRNA(Ser). Is also able to aminoacylate tRNA(Sec) with serine, to form the misacylated tRNA L-seryl-tRNA(Sec), which will be further converted into selenocysteinyl-tRNA(Sec). This chain is Serine--tRNA ligase, found in Pyrobaculum calidifontis (strain DSM 21063 / JCM 11548 / VA1).